We begin with the raw amino-acid sequence, 358 residues long: Peroxidase 54 (358 aa).

Residues 1–31 (MAVTSSSSTCDGFFIISLIVIVSSLFGTSSA) form the signal peptide. Pyrrolidone carboxylic acid is present on Gln-32. Asn-34 and Asn-44 each carry an N-linked (GlcNAc...) asparagine glycan. Cystine bridges form between Cys-42–Cys-122, Cys-75–Cys-80, Cys-128–Cys-330, and Cys-207–Cys-239. His-73 serves as the catalytic Proton acceptor. Residues Asp-74, Val-77, Gly-79, Asp-81, and Ser-83 each contribute to the Ca(2+) site. Asn-103, Asn-161, and Asn-166 each carry an N-linked (GlcNAc...) asparagine glycan. Position 170 (Pro-170) interacts with substrate. Residue Asn-178 is glycosylated (N-linked (GlcNAc...) asparagine). His-200 serves as a coordination point for heme b. Thr-201 lines the Ca(2+) pocket. N-linked (GlcNAc...) asparagine glycosylation is found at Asn-218, Asn-228, and Asn-242. Asp-252, Thr-255, and Asp-260 together coordinate Ca(2+). N-linked (GlcNAc...) asparagine glycosylation is present at Asn-298.

The protein belongs to the peroxidase family. Classical plant (class III) peroxidase subfamily. Heme b serves as cofactor. It depends on Ca(2+) as a cofactor.

It localises to the secreted. Its subcellular location is the vacuole. It catalyses the reaction 2 a phenolic donor + H2O2 = 2 a phenolic radical donor + 2 H2O. In terms of biological role, removal of H(2)O(2), oxidation of toxic reductants, biosynthesis and degradation of lignin, suberization, auxin catabolism, response to environmental stresses such as wounding, pathogen attack and oxidative stress. These functions might be dependent on each isozyme/isoform in each plant tissue. The chain is Peroxidase 54 (PER54) from Arabidopsis thaliana (Mouse-ear cress).